A 285-amino-acid polypeptide reads, in one-letter code: 2,3,4,5-tetrahydropyridine-2,6-dicarboxylate N-succinyltransferase (285 aa).

The protein belongs to the transferase hexapeptide repeat family.

It is found in the cytoplasm. It carries out the reaction (S)-2,3,4,5-tetrahydrodipicolinate + succinyl-CoA + H2O = (S)-2-succinylamino-6-oxoheptanedioate + CoA. It participates in amino-acid biosynthesis; L-lysine biosynthesis via DAP pathway; LL-2,6-diaminopimelate from (S)-tetrahydrodipicolinate (succinylase route): step 1/3. This chain is 2,3,4,5-tetrahydropyridine-2,6-dicarboxylate N-succinyltransferase, found in Beijerinckia indica subsp. indica (strain ATCC 9039 / DSM 1715 / NCIMB 8712).